Here is a 109-residue protein sequence, read N- to C-terminus: Phosphoribosyl-ATP pyrophosphatase (109 aa).

Belongs to the PRA-PH family.

It localises to the cytoplasm. It carries out the reaction 1-(5-phospho-beta-D-ribosyl)-ATP + H2O = 1-(5-phospho-beta-D-ribosyl)-5'-AMP + diphosphate + H(+). The protein operates within amino-acid biosynthesis; L-histidine biosynthesis; L-histidine from 5-phospho-alpha-D-ribose 1-diphosphate: step 2/9. The chain is Phosphoribosyl-ATP pyrophosphatase from Sphingopyxis alaskensis (strain DSM 13593 / LMG 18877 / RB2256) (Sphingomonas alaskensis).